A 315-amino-acid chain; its full sequence is Prephenate dehydratase (315 aa).

A Prephenate dehydratase domain is found at 3–190 (RIAYLGPQGT…ARTRFVLVGR (188 aa)). Residues 204-281 (SVALRLPNTP…EDVRYLGSWP (78 aa)) form the ACT domain.

As to quaternary structure, homodimer.

The enzyme catalyses prephenate + H(+) = 3-phenylpyruvate + CO2 + H2O. The protein operates within amino-acid biosynthesis; L-phenylalanine biosynthesis; phenylpyruvate from prephenate: step 1/1. In Mycobacterium sp. (strain JLS), this protein is Prephenate dehydratase (pheA).